Here is a 408-residue protein sequence, read N- to C-terminus: tRNA-specific 2-thiouridylase MnmA (408 aa).

Residues 27 to 34 (AMSGGVDS) and leucine 53 contribute to the ATP site. The active-site Nucleophile is the cysteine 121. Cysteine 121 and cysteine 222 form a disulfide bridge. Glycine 145 contributes to the ATP binding site. Residues 172 to 174 (RDQ) form an interaction with tRNA region. The active-site Cysteine persulfide intermediate is cysteine 222.

Belongs to the MnmA/TRMU family.

It is found in the cytoplasm. The catalysed reaction is S-sulfanyl-L-cysteinyl-[protein] + uridine(34) in tRNA + AH2 + ATP = 2-thiouridine(34) in tRNA + L-cysteinyl-[protein] + A + AMP + diphosphate + H(+). Its function is as follows. Catalyzes the 2-thiolation of uridine at the wobble position (U34) of tRNA, leading to the formation of s(2)U34. The sequence is that of tRNA-specific 2-thiouridylase MnmA from Rhizobium etli (strain ATCC 51251 / DSM 11541 / JCM 21823 / NBRC 15573 / CFN 42).